Here is a 249-residue protein sequence, read N- to C-terminus: 2,3-bisphosphoglycerate-dependent phosphoglycerate mutase (249 aa).

Substrate is bound by residues 11 to 18 (RHGESEWN), 24 to 25 (TG), Arg63, 90 to 93 (ERHY), Lys101, and 117 to 118 (RR). His12 (tele-phosphohistidine intermediate) is an active-site residue. Catalysis depends on Glu90, which acts as the Proton donor/acceptor. The disordered stretch occupies residues 119-138 (SYDTPPPPIERGSTYSQDAD). Residue 184–185 (GN) participates in substrate binding.

The protein belongs to the phosphoglycerate mutase family. BPG-dependent PGAM subfamily.

The enzyme catalyses (2R)-2-phosphoglycerate = (2R)-3-phosphoglycerate. The protein operates within carbohydrate degradation; glycolysis; pyruvate from D-glyceraldehyde 3-phosphate: step 3/5. Its function is as follows. Catalyzes the interconversion of 2-phosphoglycerate and 3-phosphoglycerate. This Mycolicibacterium paratuberculosis (strain ATCC BAA-968 / K-10) (Mycobacterium paratuberculosis) protein is 2,3-bisphosphoglycerate-dependent phosphoglycerate mutase.